The following is an 836-amino-acid chain: Envelope glycoprotein gp160 (836 aa).

A signal peptide spans 1 to 21 (MGMQSGWPFFCLLISLTIGSD). Over 22–656 (PHWVTVYYGV…ITKWLWYIKI (635 aa)) the chain is Extracellular. Cys43 and Cys63 are oxidised to a cystine. 19 N-linked (GlcNAc...) asparagine; by host glycosylation sites follow: Asn77, Asn121, Asn130, Asn134, Asn146, Asn150, Asn180, Asn189, Asn224, Asn228, Asn233, Asn254, Asn276, Asn282, Asn288, Asn318, Asn328, Asn340, and Asn341. 5 disulfides stabilise this stretch: Cys108/Cys197, Cys115/Cys188, Cys120/Cys147, Cys210/Cys239, and Cys220/Cys231. The V1 stretch occupies residues 120 to 146 (CNNSNGNSAGNSTTNRTEDLEDRQMKN). Positions 147–188 (CSFNITTEIRDRKKQVYSLFYVEDVVPIKDGTDNNTYRLINC) are V2. Residues 283–316 (CTRPGNNTGGQVQIGPAMTFYNIEKIVGDVRQAY) form a V3 region. Cys283 and Cys317 are joined by a disulfide. Residues 349-359 (KNGGDLEVTHL) are CD4-binding loop. 2 disulfides stabilise this stretch: Cys363-Cys418 and Cys370-Cys391. The V4 stretch occupies residues 370-391 (CNTSRLFNESENKTNKTIILPC). N-linked (GlcNAc...) asparagine; by host glycosylation is found at Asn371, Asn377, Asn381, Asn384, Asn415, and Asn435. The V5 stretch occupies residues 434 to 441 (GNKTVYPS). Residues 482–503 (AAFGLGALFLGFLGAAGSTMGA) are fusion peptide. The segment at 545–563 (KQLRAKVLAIERYLRDQQI) is immunosuppression. Cys569 and Cys575 are joined by a disulfide. 4 N-linked (GlcNAc...) asparagine; by host glycosylation sites follow: Asn582, Asn588, Asn597, and Asn609. Residues 605–639 (RKVRNYSGVIFDLIEQAQEQQNTNEKALLELDQWA) adopt a coiled-coil conformation. Residues 634 to 655 (ELDQWASLWNWFDITKWLWYIK) are MPER; binding to GalCer. Residues 657–677 (AIMVVAGIIGIRIISAIITII) traverse the membrane as a helical segment. Over 678 to 836 (ARVRQGYSPL…IRQGLERALL (159 aa)) the chain is Cytoplasmic. A YXXL motif; contains endocytosis signal motif is present at residues 684-687 (YSPL). Residues 696–715 (AARGPDRPEETEEGVGGQDR) are disordered. A Di-leucine internalization motif motif is present at residues 835-836 (LL).

Belongs to the HIV-1 env protein family. The mature envelope protein (Env) consists of a homotrimer of non-covalently associated gp120-gp41 heterodimers. The resulting complex protrudes from the virus surface as a spike. There seems to be as few as 10 spikes on the average virion. Interacts with host CD4, CCR5 and CXCR4. Gp120 also interacts with the C-type lectins CD209/DC-SIGN and CLEC4M/DC-SIGNR (collectively referred to as DC-SIGN(R)). Gp120 and gp41 interact with GalCer. Gp120 interacts with host ITGA4/ITGB7 complex; on CD4+ T-cells, this interaction results in rapid activation of integrin ITGAL/LFA-1, which facilitates efficient cell-to-cell spreading of HIV-1. Gp120 interacts with cell-associated heparan sulfate; this interaction increases virus infectivity on permissive cells and may be involved in infection of CD4- cells. As to quaternary structure, the mature envelope protein (Env) consists of a homotrimer of non-covalently associated gp120-gp41 heterodimers. The resulting complex protrudes from the virus surface as a spike. There seems to be as few as 10 spikes on the average virion. Highly glycosylated by host. The high number of glycan on the protein is reffered to as 'glycan shield' because it contributes to hide protein sequence from adaptive immune system. In terms of processing, palmitoylation of the transmembrane protein and of Env polyprotein (prior to its proteolytic cleavage) is essential for their association with host cell membrane lipid rafts. Palmitoylation is therefore required for envelope trafficking to classical lipid rafts, but not for viral replication. Post-translationally, specific enzymatic cleavages in vivo yield mature proteins. Envelope glycoproteins are synthesized as an inactive precursor that is heavily N-glycosylated and processed likely by host cell furin in the Golgi to yield the mature SU and TM proteins. The cleavage site between SU and TM requires the minimal sequence [KR]-X-[KR]-R. About 2 of the 9 disulfide bonds of gp41 are reduced by P4HB/PDI, following binding to CD4 receptor.

Its subcellular location is the virion membrane. It localises to the host cell membrane. The protein localises to the host endosome membrane. Functionally, oligomerizes in the host endoplasmic reticulum into predominantly trimers. In a second time, gp160 transits in the host Golgi, where glycosylation is completed. The precursor is then proteolytically cleaved in the trans-Golgi and thereby activated by cellular furin or furin-like proteases to produce gp120 and gp41. Attaches the virus to the host lymphoid cell by binding to the primary receptor CD4. This interaction induces a structural rearrangement creating a high affinity binding site for a chemokine coreceptor like CXCR4 and/or CCR5. Acts as a ligand for CD209/DC-SIGN and CLEC4M/DC-SIGNR, which are respectively found on dendritic cells (DCs), and on endothelial cells of liver sinusoids and lymph node sinuses. These interactions allow capture of viral particles at mucosal surfaces by these cells and subsequent transmission to permissive cells. HIV subverts the migration properties of dendritic cells to gain access to CD4+ T-cells in lymph nodes. Virus transmission to permissive T-cells occurs either in trans (without DCs infection, through viral capture and transmission), or in cis (following DCs productive infection, through the usual CD4-gp120 interaction), thereby inducing a robust infection. In trans infection, bound virions remain infectious over days and it is proposed that they are not degraded, but protected in non-lysosomal acidic organelles within the DCs close to the cell membrane thus contributing to the viral infectious potential during DCs' migration from the periphery to the lymphoid tissues. On arrival at lymphoid tissues, intact virions recycle back to DCs' cell surface allowing virus transmission to CD4+ T-cells. Its function is as follows. Acts as a class I viral fusion protein. Under the current model, the protein has at least 3 conformational states: pre-fusion native state, pre-hairpin intermediate state, and post-fusion hairpin state. During fusion of viral and target intracellular membranes, the coiled coil regions (heptad repeats) assume a trimer-of-hairpins structure, positioning the fusion peptide in close proximity to the C-terminal region of the ectodomain. The formation of this structure appears to drive apposition and subsequent fusion of viral and target cell membranes. Complete fusion occurs in host cell endosomes and is dynamin-dependent, however some lipid transfer might occur at the plasma membrane. The virus undergoes clathrin-dependent internalization long before endosomal fusion, thus minimizing the surface exposure of conserved viral epitopes during fusion and reducing the efficacy of inhibitors targeting these epitopes. Membranes fusion leads to delivery of the nucleocapsid into the cytoplasm. The sequence is that of Envelope glycoprotein gp160 from Human immunodeficiency virus type 1 group N (isolate YBF106) (HIV-1).